A 473-amino-acid polypeptide reads, in one-letter code: MGGDAIVLYPYPGLGHLISMVELGKLLLTHHPSFSITILASTAPTTIAATAKLVASSNDQLTNYIKAVSADNPAINFHHLPTISSLPEHIEKLNLPFEYARLQIPNILQVLQTLKSSLKALILDMFCDALFDVTKDLNIPTFYFYTSAGRSLAVLLNIPTFHRTTNSLSDFGDVPISISGMPPIPVSAMPKLLFDRSTNFYKSFLSTSTHMAKSNGIILNTFDLLEERALKALRAGLCLPNQPTPPIFTVGPLISGKSGDNDEHESLKWLNNQPKDSVVFLCFGSMGVFSIKQLEAMALGLEKSGQRFLWVVRNPPIEELPVEEPSLEEILPKGFVERTKDRGLVVRKWAPQVEVLSHDSVGGFVTHCGWNSVLEAVCNGVPMVAWPLYAEQKLGRVFLVEEMKVAVGVKESETGFVSADELEKRVRELMDSESGDEIRGRVSEFSNGGVKAKEEGGSSVASLAKLAQLWKQK.

It belongs to the UDP-glycosyltransferase family.

Its pathway is pigment biosynthesis; anthocyanin biosynthesis. Functionally, sequentially catalyzes two glycosylation steps at the 5-OH and 3-OH positions of anthocyanidin. Unglycosylated anthocyanidin or anthocyanidin 5-O-glucoside, but not anthocyanidin 3-O-glucoside, can be used as glucosyl acceptor. This is Anthocyanidin 5,3-O-glucosyltransferase (RhGT1) from Rosa hybrid cultivar.